The following is a 398-amino-acid chain: DNA-directed RNA polymerase III subunit RPC4 (398 aa).

A disordered region spans residues 1-149 (MSEGNAAGEP…IKKEKRETDE (149 aa)). The residue at position 2 (Ser2) is an N-acetylserine. Ser42 carries the post-translational modification Phosphoserine. Composition is skewed to basic and acidic residues over residues 66 to 100 (KIKE…RGRP), 116 to 128 (MMKK…KTVD), and 140 to 149 (IKKEKRETDE). Residues Lys68 and Lys78 each participate in a glycyl lysine isopeptide (Lys-Gly) (interchain with G-Cter in SUMO2) cross-link. 3 positions are modified to omega-N-methylarginine: Arg95, Arg97, and Arg99. Residues Lys141, Lys152, Lys160, Lys190, Lys199, Lys206, Lys220, Lys285, Lys302, and Lys396 each participate in a glycyl lysine isopeptide (Lys-Gly) (interchain with G-Cter in SUMO2) cross-link. The segment at 191-244 (EESEEPEAKPFSAGPKEEDMEVDVPAVKVKEEPRDEEEEAKVKAPPRAARKTPG) is disordered.

The protein belongs to the eukaryotic RPC4/POLR3D RNA polymerase subunit family. As to quaternary structure, component of the RNA polymerase III complex consisting of 17 subunits: a ten-subunit horseshoe-shaped catalytic core composed of POLR3A/RPC1, POLR3B/RPC2, POLR1C/RPAC1, POLR1D/RPAC2, POLR3K/RPC10, POLR2E/RPABC1, POLR2F/RPABC2, POLR2H/RPABC3, POLR2K/RPABC4 and POLR2L/RPABC5; a mobile stalk composed of two subunits POLR3H/RPC8 and CRCP/RPC9, protruding from the core and functioning primarily in transcription initiation; and additional subunits homologous to general transcription factors of the RNA polymerase II machinery, POLR3C/RPC3-POLR3F/RPC6-POLR3G/RPC7 heterotrimer required for transcription initiation and POLR3D/RPC4-POLR3E/RPC5 heterodimer involved in both transcription initiation and termination. Post-translationally, sumoylation on Lys-141 can serve as a signal to mark misfolded Pol III for proteasomal degradation.

The protein resides in the nucleus. Its function is as follows. DNA-dependent RNA polymerase catalyzes the transcription of DNA into RNA using the four ribonucleoside triphosphates as substrates. Specific peripheric component of RNA polymerase III (Pol III) which synthesizes small non-coding RNAs including 5S rRNA, snRNAs, tRNAs and miRNAs from at least 500 distinct genomic loci. Enables recruitment of Pol III at transcription initiation site and drives transcription initiation from both type 2 and type 3 DNA promoters. Required for efficient transcription termination and reinitiation. Pol III plays a key role in sensing and limiting infection by intracellular bacteria and DNA viruses. Acts as nuclear and cytosolic DNA sensor involved in innate immune response. Can sense non-self dsDNA that serves as template for transcription into dsRNA. The non-self RNA polymerase III transcripts, such as Epstein-Barr virus-encoded RNAs (EBERs) induce type I interferon and NF-kappa-B through the RIG-I pathway. The polypeptide is DNA-directed RNA polymerase III subunit RPC4 (Mus musculus (Mouse)).